The chain runs to 295 residues: Glycine--tRNA ligase alpha subunit (295 aa).

It belongs to the class-II aminoacyl-tRNA synthetase family. In terms of assembly, tetramer of two alpha and two beta subunits.

The protein localises to the cytoplasm. It catalyses the reaction tRNA(Gly) + glycine + ATP = glycyl-tRNA(Gly) + AMP + diphosphate. This is Glycine--tRNA ligase alpha subunit (glyQ) from Bacillus subtilis (strain 168).